The sequence spans 1294 residues: CLIP-associating protein 2 (1294 aa).

Positions 1-61 (MAMGDDKSFD…KVGGASKEGG (61 aa)) are disordered. Residues Ser8 and Ser14 each carry the phosphoserine modification. Gly residues predominate over residues 47–61 (SAGGPKVGGASKEGG). The segment at 60-311 (GGAGAVDEDD…KSLQTYLKSS (252 aa)) is TOG 1. HEAT repeat units follow at residues 173-208 (HGAEAIVPTLFNLVPNSAKVMATSGCAAIRFIIRHT), 209-245 (HVPRLIPLITSNCTSKSVPVRRRSFEFLDLLLQEWQT), and 250-287 (RHAAVLVETIKKGIHDADAEARVEARKTYMGLRNHFPG). The tract at residues 314–368 (VASLPQSDRSSSSSQESLNRPFSSKWSTANPSTVAGRVSAGSSKASSLPGSLQRS) is disordered. Ser316, Ser327, and Ser330 each carry phosphoserine. A compositionally biased stretch (low complexity) spans 316 to 334 (SLPQSDRSSSSSQESLNRP). Composition is skewed to polar residues over residues 335–346 (FSSKWSTANPST) and 353–367 (AGSSKASSLPGSLQR). Residues Ser360, Ser368, Ser370, and Ser407 each carry the phosphoserine modification. The interval 409–467 (EDTSDKLDGTASEDGRVRAKLSAPLAGMGNAKADSRGRSRTKMVSQSQPGSRSGSPGRV) is disordered. A compositionally biased stretch (basic and acidic residues) spans 411 to 425 (TSDKLDGTASEDGRV). Positions 444-580 (RGRSRTKMVS…GPGYGISQSS (137 aa)) are interaction with microtubules, MAPRE1 and MAPRE3. Residues 453 to 467 (SQSQPGSRSGSPGRV) show a composition bias toward low complexity. Phosphoserine is present on residues Ser455, Ser459, Ser463, Ser478, and Ser489. A disordered region spans residues 488–557 (ASAQKRSKIP…PLASRHHSRS (70 aa)). Positions 494-497 (SKIP) match the SXIP motif 1; mediates interaction with MAPRE1 and targeting to microtubule plus ends motif. Position 507 is a phosphoserine (Ser507). The SXIP motif 2; mediates interaction with MAPRE1 and targeting to microtubule plus ends signature appears at 517–520 (SRIP). 7 positions are modified to phosphoserine: Ser525, Ser529, Ser585, Ser587, Ser596, Ser621, and Ser627. The disordered stretch occupies residues 617 to 645 (YGMHSDDDANSDASSACSERSYSSRNGSI). Low complexity predominate over residues 627 to 641 (SDASSACSERSYSSR). Residues 649–881 (MRQTEDVAEV…TKLLHNHLRN (233 aa)) are TOG 2. 2 HEAT repeats span residues 710–747 (RVFSMFLETLVDFIQVHKDDLQDWLFVLLTQLLKKMGA) and 772–809 (LQFNILMRFTVDQTQTPSLKVKVAILKYIETLAKQMDP). Thr787 is subject to Phosphothreonine. The interaction with RSN and localization to the Golgi and kinetochores stretch occupies residues 872–1294 (TKLLHNHLRN…DPTTDVSGQS (423 aa)). Disordered regions lie at residues 878–928 (HLRN…FDYD) and 952–995 (SFRS…DSSQ). Polar residues-rich tracts occupy residues 880-892 (RNTGNGTQSSMGS) and 901-922 (SPANWSSPLTSPTNTSQNTLSP). The residue at position 892 (Ser892) is a Phosphoserine. Phosphoserine is present on residues Ser952, Ser955, Ser1013, and Ser1029. The span at 955–972 (SQEDMNEPLKRDSKKDDG) shows a compositional bias: basic and acidic residues. Positions 1017–1294 (RDYNPYNYSD…DPTTDVSGQS (278 aa)) are required for cortical localization. HEAT repeat units follow at residues 1054-1091 (LDHSDLVAELLKELSNHNERVEERKIALYELMKLTQEE), 1098-1135 (EHFKTILLLLLETLGDKEPTIRALALKVLREILRHQPA), and 1216-1253 (LLLPEIMPGLIQGYDNSESSVRKACVFCLVAVHAVIGD).

The protein belongs to the CLASP family. In terms of assembly, interacts with microtubules. Interacts with MAPRE1; probably required for targeting to the growing microtubule plus ends. Interacts with CLIP2, ERC1, MAPRE3, PHLDB2 and RSN. The interaction with ERC1 may be mediated by PHLDB2. Interacts with GCC2; recruits CLASP2 to Golgi membranes. Interacts with MACF1. Interacts with mtcl2 and MTCL1. Post-translationally, phosphorylated by GSK3B. Phosphorylation reduces MAPRE1 binding. Phosphorylation by GSK3B may negatively regulate binding to microtubule lattices in lamella. In terms of tissue distribution, brain-specific.

The protein localises to the cytoplasm. Its subcellular location is the cytoskeleton. It is found in the microtubule organizing center. It localises to the centrosome. The protein resides in the chromosome. The protein localises to the centromere. Its subcellular location is the kinetochore. It is found in the spindle. It localises to the golgi apparatus. The protein resides in the trans-Golgi network. The protein localises to the cell membrane. Its subcellular location is the cell projection. It is found in the ruffle membrane. It localises to the cell cortex. Functionally, microtubule plus-end tracking protein that promotes the stabilization of dynamic microtubules. Involved in the nucleation of noncentrosomal microtubules originating from the trans-Golgi network (TGN). Required for the polarization of the cytoplasmic microtubule arrays in migrating cells towards the leading edge of the cell. May act at the cell cortex to enhance the frequency of rescue of depolymerizing microtubules by attaching their plus-ends to cortical platforms composed of ERC1 and PHLDB2. This cortical microtubule stabilizing activity is regulated at least in part by phosphatidylinositol 3-kinase signaling. Also performs a similar stabilizing function at the kinetochore which is essential for the bipolar alignment of chromosomes on the mitotic spindle. Acts as a mediator of ERBB2-dependent stabilization of microtubules at the cell cortex. The sequence is that of CLIP-associating protein 2 (CLASP2) from Homo sapiens (Human).